A 51-amino-acid chain; its full sequence is Large ribosomal subunit protein bL33 (51 aa).

This sequence belongs to the bacterial ribosomal protein bL33 family.

This Pseudoalteromonas atlantica (strain T6c / ATCC BAA-1087) protein is Large ribosomal subunit protein bL33.